The chain runs to 821 residues: Leucine--tRNA ligase (821 aa).

The short motif at 42–52 (PYPSGKLHMGH) is the 'HIGH' region element. The short motif at 583–587 (KMSKS) is the 'KMSKS' region element. Lys-586 is a binding site for ATP.

This sequence belongs to the class-I aminoacyl-tRNA synthetase family.

The protein resides in the cytoplasm. It catalyses the reaction tRNA(Leu) + L-leucine + ATP = L-leucyl-tRNA(Leu) + AMP + diphosphate. In Carboxydothermus hydrogenoformans (strain ATCC BAA-161 / DSM 6008 / Z-2901), this protein is Leucine--tRNA ligase.